A 310-amino-acid chain; its full sequence is Ribose-phosphate pyrophosphokinase (310 aa).

Residues 34–36 (DME) and 93–94 (RQ) contribute to the ATP site. Positions 127 and 167 each coordinate Mg(2+). Lysine 190 is a catalytic residue. Residues arginine 192, aspartate 216, and 220-224 (DSGGT) each bind D-ribose 5-phosphate.

The protein belongs to the ribose-phosphate pyrophosphokinase family. Class I subfamily. Homohexamer. It depends on Mg(2+) as a cofactor.

It localises to the cytoplasm. The enzyme catalyses D-ribose 5-phosphate + ATP = 5-phospho-alpha-D-ribose 1-diphosphate + AMP + H(+). It participates in metabolic intermediate biosynthesis; 5-phospho-alpha-D-ribose 1-diphosphate biosynthesis; 5-phospho-alpha-D-ribose 1-diphosphate from D-ribose 5-phosphate (route I): step 1/1. Its function is as follows. Involved in the biosynthesis of the central metabolite phospho-alpha-D-ribosyl-1-pyrophosphate (PRPP) via the transfer of pyrophosphoryl group from ATP to 1-hydroxyl of ribose-5-phosphate (Rib-5-P). This Granulibacter bethesdensis (strain ATCC BAA-1260 / CGDNIH1) protein is Ribose-phosphate pyrophosphokinase.